The following is a 178-amino-acid chain: CASP-like protein 4D1 (178 aa).

Over 1–14 (MAPPPPSPPSVTLR) the chain is Cytoplasmic. Residues 15-35 (TVLLLLRVLTAAFLVITVVLI) form a helical membrane-spanning segment. Residues 36-60 (STNTVTLEVSSTSIKMRFNDVYAYR) lie on the Extracellular side of the membrane. Residues 61–81 (YMLSAAVIGLLYAVVQLFLTI) form a helical membrane-spanning segment. At 82–149 (SQFATGTTHP…KFFSKGYASA (68 aa)) the chain is on the cytoplasmic side. A helical transmembrane segment spans residues 150 to 170 (SLLLFAFVSLAVLSVFSSLAL). At 171–178 (SKRPIQVS) the chain is on the extracellular side.

The protein belongs to the Casparian strip membrane proteins (CASP) family. As to quaternary structure, homodimer and heterodimers.

Its subcellular location is the cell membrane. The protein is CASP-like protein 4D1 of Arabidopsis lyrata subsp. lyrata (Lyre-leaved rock-cress).